Consider the following 442-residue polypeptide: MIGYQIYVRSFRDGNFDGVGDFKGLKGAISYLKELGVDFVWLMPVFSSISFHGYDVVDFYSFKAEYGDEKDFREMIEAFHDNGIKVVLDLPIHHTGFLHTWFQKALKGDPHYRDYYVWASEKTDLDERREWDNERIWHPLEDGRFYRGLFGPLSPDLNYDNPQVFEEMKKVVYHLLEMGVDGFRFDAAKHMRDTLEQNVRFWRYFLSDIEGIFLAEIWAESKVVDEHGRIFGYMLNFDTSHCIKEAVWKENFKVLIESIERALVGKDYLPVNFTSNHDMSRLASFEGGLSEEKVKLSLSILFTLPGVPLIFYGDELGMKGIYRKPNTEVVLDPFPWSENISLEGQTFWKWPAYNSPFSGVSVEYQKKKRDSILLHIMKWTGFRKENHWLDRANIEFLCKEEKLLHVYRLVDEGRSLKVIHNLSNGEMVFEGVRVQPYSTEVI.

Residues Asp13, Asn15, Asp17, Val19, and Asp21 each contribute to the Ca(2+) site. Asp186 (nucleophile) is an active-site residue. Glu216 serves as the catalytic Proton donor.

The protein belongs to the glycosyl hydrolase 13 family. As to quaternary structure, monomer. It depends on Ca(2+) as a cofactor.

It localises to the cytoplasm. It carries out the reaction Transfers a segment of a (1-&gt;4)-alpha-D-glucan to a new position in an acceptor, which may be glucose or a (1-&gt;4)-alpha-D-glucan.. Its function is as follows. Hydrolyzes the 1,4-alpha-glycoside bonds in oligomeric and polymeric 1,4-alpha-glucans and transfers oligosaccharides (maltotriose being the shortest one) to acceptor maltodextrins. The protein is 4-alpha-glucanotransferase (mgtA) of Thermotoga neapolitana.